The primary structure comprises 299 residues: Protein charybde (299 aa).

Residues Leu73–Gln103 form a disordered region. Over residues Ala84–Val96 the composition is skewed to gly residues.

The protein belongs to the DDIT4 family.

The protein resides in the cytoplasm. Inhibits cell growth by regulating the Tor pathway upstream of the Tsc1-Tsc2 complex and downstream of Akt1. Acts as a cell death activator during head development. This is Protein charybde (chrb) from Drosophila melanogaster (Fruit fly).